A 256-amino-acid chain; its full sequence is Probable hydroxyacylglutathione hydrolase glo2 (256 aa).

Zn(2+) is bound by residues histidine 63, histidine 65, aspartate 67, histidine 68, histidine 118, and aspartate 139. Residues arginine 148, 178 to 180 (HEY), and 250 to 253 (RDMK) each bind substrate. Histidine 178 lines the Zn(2+) pocket.

Belongs to the metallo-beta-lactamase superfamily. Glyoxalase II family. Zn(2+) is required as a cofactor.

It localises to the cytoplasm. The protein resides in the nucleus. The catalysed reaction is an S-(2-hydroxyacyl)glutathione + H2O = a 2-hydroxy carboxylate + glutathione + H(+). It carries out the reaction (R)-S-lactoylglutathione + H2O = (R)-lactate + glutathione + H(+). Its pathway is secondary metabolite metabolism; methylglyoxal degradation; (R)-lactate from methylglyoxal: step 2/2. Its function is as follows. Thiolesterase that catalyzes the hydrolysis of S-D-lactoylglutathione to form glutathione and D-lactic acid. Involved in the metabolism of methylglyoxal, a toxic compound for yeast proliferation, by converting methylglyoxal to lactate via S-D-lactoylglutathione by sequential enzyme reactions catalyzed by glyoxalase I and glyoxalase II. The chain is Probable hydroxyacylglutathione hydrolase glo2 (glo2) from Schizosaccharomyces pombe (strain 972 / ATCC 24843) (Fission yeast).